Here is a 50-residue protein sequence, read N- to C-terminus: Insulin (50 aa).

Disulfide bonds link C7-C36, C19-C49, and C35-C40.

Belongs to the insulin family. Heterodimer of a B chain and an A chain linked by two disulfide bonds.

It localises to the secreted. Functionally, insulin decreases blood glucose concentration. It increases cell permeability to monosaccharides, amino acids and fatty acids. It accelerates glycolysis, the pentose phosphate cycle, and glycogen synthesis in liver. The protein is Insulin (ins) of Myoxocephalus scorpius (Shorthorn sculpin).